Consider the following 167-residue polypeptide: 18.8 kDa class II heat shock protein (167 aa).

The 119-residue stretch at 49-167 (DAKAMAATPA…KPKTVEVKVA (119 aa)) folds into the sHSP domain.

This sequence belongs to the small heat shock protein (HSP20) family.

The protein resides in the cytoplasm. The sequence is that of 18.8 kDa class II heat shock protein (SHSP-2) from Ipomoea nil (Japanese morning glory).